Consider the following 265-residue polypeptide: Asparagine-rich protein (265 aa).

A signal peptide spans 1 to 21 (MSRLTLLVLLVIAAVIQKVHG). 2 disordered regions span residues 20–71 (HGQG…NRNI) and 88–183 (SNQN…NQQY). Composition is skewed to basic and acidic residues over residues 22–35 (QGRE…HEPG) and 44–55 (EKTERNLREPNR). Residues 88–98 (SNQNNFGNNRS) show a composition bias toward low complexity. Positions 115 to 124 (NKSEVEKENG) are enriched in basic and acidic residues. Positions 152-166 (KVQHRIAKRFQKRHP) are enriched in basic residues.

As to expression, nacreous layer of shell (at protein level). Expressed primarily in the mantle with highest level in the mantle pallium and lower level in the mantle edge.

The protein localises to the secreted. The sequence is that of Asparagine-rich protein from Pinctada maxima (Silver-lipped pearl oyster).